Here is a 61-residue protein sequence, read N- to C-terminus: Metallothionein-2 (61 aa).

At M1 the chain carries N-acetylmethionine. Residues 1 to 29 (MDPNCSCTAGESCTCAGSCKCKDCKCASC) form a beta region. Residues C5, C7, C13, C15, C19, C21, C24, C26, C29, C33, C34, C36, C37, C41, C44, C48, C50, and C57 each coordinate a divalent metal cation. An alpha region spans residues 30-61 (KKSCCSCCPVGCAKCAQGCVCKGASDKCSCCA). Residue S58 is modified to Phosphoserine. Residues C59 and C60 each contribute to the a divalent metal cation site.

It belongs to the metallothionein superfamily. Type 1 family. As to quaternary structure, interacts with EOLA1.

Functionally, metallothioneins have a high content of cysteine residues that bind various heavy metals; these proteins are transcriptionally regulated by both heavy metals and glucocorticoids. The polypeptide is Metallothionein-2 (MT2A) (Ovis aries (Sheep)).